The primary structure comprises 848 residues: Beta-galactosidase 11 (848 aa).

The N-terminal stretch at 1-23 (MSAAAVLAVVAAAVAALAAAASG) is a signal peptide. The N-linked (GlcNAc...) asparagine glycan is linked to N29. E189 acts as the Proton donor in catalysis. The active-site Nucleophile is the E260. Residues N261, N472, and N783 are each glycosylated (N-linked (GlcNAc...) asparagine). Positions 750-837 (GGLKPTAVLS…GTLAVQAKCS (88 aa)) constitute an SUEL-type lectin domain.

This sequence belongs to the glycosyl hydrolase 35 family.

The protein resides in the secreted. It is found in the extracellular space. It localises to the apoplast. The catalysed reaction is Hydrolysis of terminal non-reducing beta-D-galactose residues in beta-D-galactosides.. The chain is Beta-galactosidase 11 from Oryza sativa subsp. japonica (Rice).